The chain runs to 397 residues: Enoyl-[acyl-carrier-protein] reductase [NADH] (397 aa).

Residues 48-53 (GASTGY), 74-75 (LE), 111-112 (DA), and 139-140 (LA) contribute to the NAD(+) site. Tyr-225 serves as a coordination point for substrate. Tyr-235 serves as the catalytic Proton donor. Residues Lys-244 and 273–275 (VVT) each bind NAD(+).

Belongs to the TER reductase family. Monomer.

It carries out the reaction a 2,3-saturated acyl-[ACP] + NAD(+) = a (2E)-enoyl-[ACP] + NADH + H(+). The protein operates within lipid metabolism; fatty acid biosynthesis. In terms of biological role, involved in the final reduction of the elongation cycle of fatty acid synthesis (FAS II). Catalyzes the reduction of a carbon-carbon double bond in an enoyl moiety that is covalently linked to an acyl carrier protein (ACP). The sequence is that of Enoyl-[acyl-carrier-protein] reductase [NADH] from Tolumonas auensis (strain DSM 9187 / NBRC 110442 / TA 4).